Reading from the N-terminus, the 339-residue chain is RNA 3'-terminal phosphate cyclase (339 aa).

Residues glutamine 103 and 283-287 (HLADQ) contribute to the ATP site. Histidine 308 functions as the Tele-AMP-histidine intermediate in the catalytic mechanism.

It belongs to the RNA 3'-terminal cyclase family. Type 1 subfamily.

It is found in the cytoplasm. The enzyme catalyses a 3'-end 3'-phospho-ribonucleotide-RNA + ATP = a 3'-end 2',3'-cyclophospho-ribonucleotide-RNA + AMP + diphosphate. Its function is as follows. Catalyzes the conversion of 3'-phosphate to a 2',3'-cyclic phosphodiester at the end of RNA. The mechanism of action of the enzyme occurs in 3 steps: (A) adenylation of the enzyme by ATP; (B) transfer of adenylate to an RNA-N3'P to produce RNA-N3'PP5'A; (C) and attack of the adjacent 2'-hydroxyl on the 3'-phosphorus in the diester linkage to produce the cyclic end product. The biological role of this enzyme is unknown but it is likely to function in some aspects of cellular RNA processing. The polypeptide is RNA 3'-terminal phosphate cyclase (Salmonella typhimurium (strain LT2 / SGSC1412 / ATCC 700720)).